A 412-amino-acid polypeptide reads, in one-letter code: Argininosuccinate synthase (412 aa).

10 to 18 (AYSGGLDTS) lines the ATP pocket. Tyr-89 is an L-citrulline binding site. An ATP-binding site is contributed by Gly-119. Positions 121, 125, and 126 each coordinate L-aspartate. Position 125 (Asn-125) interacts with L-citrulline. Residues Arg-129, Ser-177, Glu-261, and Tyr-273 each contribute to the L-citrulline site.

The protein belongs to the argininosuccinate synthase family. Type 1 subfamily. As to quaternary structure, homotetramer.

It is found in the cytoplasm. It carries out the reaction L-citrulline + L-aspartate + ATP = 2-(N(omega)-L-arginino)succinate + AMP + diphosphate + H(+). The protein operates within amino-acid biosynthesis; L-arginine biosynthesis; L-arginine from L-ornithine and carbamoyl phosphate: step 2/3. The chain is Argininosuccinate synthase from Bifidobacterium longum (strain DJO10A).